The primary structure comprises 485 residues: Membrane-bound lytic murein transglycosylase F (485 aa).

A signal peptide spans 1–29 (MFAHTALRQRCAKWLLATGLFLLLGACVE). Positions 30-267 (KPSTLERVKE…RLKDRYYGHV (238 aa)) are non-LT domain. Positions 268–485 (DVLGYVGAYT…DKPADKSSPM (218 aa)) are LT domain. The active site involves Glu-314. Residues 465–485 (EGNLHVPGVNKDKPADKSSPM) are disordered. Over residues 474-485 (NKDKPADKSSPM) the composition is skewed to basic and acidic residues.

The protein in the N-terminal section; belongs to the bacterial solute-binding protein 3 family. It in the C-terminal section; belongs to the transglycosylase Slt family.

It localises to the cell outer membrane. It catalyses the reaction Exolytic cleavage of the (1-&gt;4)-beta-glycosidic linkage between N-acetylmuramic acid (MurNAc) and N-acetylglucosamine (GlcNAc) residues in peptidoglycan, from either the reducing or the non-reducing ends of the peptidoglycan chains, with concomitant formation of a 1,6-anhydrobond in the MurNAc residue.. In terms of biological role, murein-degrading enzyme that degrades murein glycan strands and insoluble, high-molecular weight murein sacculi, with the concomitant formation of a 1,6-anhydromuramoyl product. Lytic transglycosylases (LTs) play an integral role in the metabolism of the peptidoglycan (PG) sacculus. Their lytic action creates space within the PG sacculus to allow for its expansion as well as for the insertion of various structures such as secretion systems and flagella. The polypeptide is Membrane-bound lytic murein transglycosylase F (Pseudomonas putida (strain ATCC 700007 / DSM 6899 / JCM 31910 / BCRC 17059 / LMG 24140 / F1)).